A 156-amino-acid polypeptide reads, in one-letter code: D-aminoacyl-tRNA deacylase (156 aa).

Positions 137–138 match the Gly-cisPro motif, important for rejection of L-amino acids motif; that stretch reads GP.

The protein belongs to the DTD family. As to quaternary structure, homodimer.

It is found in the cytoplasm. It carries out the reaction glycyl-tRNA(Ala) + H2O = tRNA(Ala) + glycine + H(+). The catalysed reaction is a D-aminoacyl-tRNA + H2O = a tRNA + a D-alpha-amino acid + H(+). In terms of biological role, an aminoacyl-tRNA editing enzyme that deacylates mischarged D-aminoacyl-tRNAs. Also deacylates mischarged glycyl-tRNA(Ala), protecting cells against glycine mischarging by AlaRS. Acts via tRNA-based rather than protein-based catalysis; rejects L-amino acids rather than detecting D-amino acids in the active site. By recycling D-aminoacyl-tRNA to D-amino acids and free tRNA molecules, this enzyme counteracts the toxicity associated with the formation of D-aminoacyl-tRNA entities in vivo and helps enforce protein L-homochirality. The protein is D-aminoacyl-tRNA deacylase of Dictyoglomus turgidum (strain DSM 6724 / Z-1310).